The primary structure comprises 203 residues: Peptidyl-prolyl cis-trans isomerase FKBP11 (203 aa).

An N-terminal signal peptide occupies residues 1 to 29 (MTLRPSLLPLRLLLLLLLLLRGAVCQAEA). Positions 59-146 (GDTLHIHYSG…HFDVELIALI (88 aa)) constitute a PPIase FKBP-type domain. A helical membrane pass occupies residues 158-178 (ILPLVGMAMVPALLGLIGYHL).

It belongs to the FKBP-type PPIase family. Interacts with IFITM5.

It is found in the membrane. It carries out the reaction [protein]-peptidylproline (omega=180) = [protein]-peptidylproline (omega=0). Functionally, PPIases accelerate the folding of proteins during protein synthesis. The polypeptide is Peptidyl-prolyl cis-trans isomerase FKBP11 (FKBP11) (Bos taurus (Bovine)).